A 57-amino-acid polypeptide reads, in one-letter code: Large ribosomal subunit protein bL32 (57 aa).

This sequence belongs to the bacterial ribosomal protein bL32 family.

The protein is Large ribosomal subunit protein bL32 of Bacillus licheniformis (strain ATCC 14580 / DSM 13 / JCM 2505 / CCUG 7422 / NBRC 12200 / NCIMB 9375 / NCTC 10341 / NRRL NRS-1264 / Gibson 46).